A 360-amino-acid chain; its full sequence is GTP 3',8-cyclase (360 aa).

One can recognise a Radical SAM core domain in the interval 33–251; that stretch reads RFGRSATDLR…LQPHFRLRPD (219 aa). Arg42 provides a ligand contact to GTP. 2 residues coordinate [4Fe-4S] cluster: Cys49 and Cys53. Position 55 (Tyr55) interacts with S-adenosyl-L-methionine. Cys56 is a binding site for [4Fe-4S] cluster. Arg93 is a GTP binding site. Gly97 contacts S-adenosyl-L-methionine. Thr124 lines the GTP pocket. Residue Ser148 coordinates S-adenosyl-L-methionine. Lys185 lines the GTP pocket. Residue Met219 participates in S-adenosyl-L-methionine binding. [4Fe-4S] cluster-binding residues include Cys287 and Cys290. Residue 292 to 294 participates in GTP binding; it reads RTR. Residue Cys304 participates in [4Fe-4S] cluster binding.

The protein belongs to the radical SAM superfamily. MoaA family. In terms of assembly, monomer and homodimer. The cofactor is [4Fe-4S] cluster.

The catalysed reaction is GTP + AH2 + S-adenosyl-L-methionine = (8S)-3',8-cyclo-7,8-dihydroguanosine 5'-triphosphate + 5'-deoxyadenosine + L-methionine + A + H(+). Its pathway is cofactor biosynthesis; molybdopterin biosynthesis. Its function is as follows. Catalyzes the cyclization of GTP to (8S)-3',8-cyclo-7,8-dihydroguanosine 5'-triphosphate. In Mycobacterium marinum (strain ATCC BAA-535 / M), this protein is GTP 3',8-cyclase.